The chain runs to 1253 residues: Structural polyprotein (1253 aa).

The segment at 43-77 is host transcription inhibition; it reads VQAQQMQQLISAVSALTTKQNGKAPKKPKKKPQKA. The interval 58-110 is disordered; that stretch reads LTTKQNGKAPKKPKKKPQKAKAKKNEQQKKNENKKPPPKQKNPAKKKKPGKRE. The segment covering 66-79 has biased composition (basic residues); sequence APKKPKKKPQKAKA. Residues 70 to 106 carry the Nuclear localization signal motif; that stretch reads PKKKPQKAKAKKNEQQKKNENKKPPPKQKNPAKKKKP. A compositionally biased stretch (basic and acidic residues) spans 80–92; sequence KKNEQQKKNENKK. Positions 90-121 are binding to the viral RNA; the sequence is NKKPPPKQKNPAKKKKPGKRERMCMKIENDCI. The segment covering 93–108 has biased composition (basic residues); that stretch reads PPPKQKNPAKKKKPGK. Residues 106 to 120 form a ribosome-binding region; sequence PGKRERMCMKIENDC. The cysteines at positions 120 and 135 are disulfide-linked. The Peptidase S3 domain maps to 120-268; the sequence is CIFEVKLDGK…RYTPEGTEEW (149 aa). His146 serves as the catalytic Charge relay system. The short motif at 151 to 161 is the Nuclear export signal element; it reads IDNPDLAKLTY. The interaction with spike glycoprotein E2 stretch occupies residues 162 to 167; that stretch reads KKSSKY. Catalysis depends on Asp168, which acts as the Charge relay system. The tract at residues 190–200 is dimerization of the capsid protein; it reads PEGHYNWHHGA. The active-site Charge relay system is Ser220. The dimerization of the capsid protein stretch occupies residues 226-230; the sequence is DNKGR. A functions as an uncleaved signal peptide for the precursor of protein E3/E2 region spans residues 269–280; it reads SAALMMCVLANV. Cystine bridges form between Cys275–Cys284, Cys289–Cys293, and Cys292–Cys324. A glycan (N-linked (GlcNAc...) asparagine; by host) is linked at Asn279. N-linked (GlcNAc...) asparagine; by host glycosylation is present at Asn325. Over 333 to 694 the chain is Extracellular; sequence SVTKHFNVYK…EIILYYYGLY (362 aa). Cystine bridges form between Cys351-Cys457, Cys354-Cys360, Cys423-Cys437, Cys485-Cys597, Cys533-Cys557, and Cys535-Cys552. Interaction with host Mxra8 receptor stretches follow at residues 358-361 and 394-396; these read QFCY and HEH. Residues 516-519 are interaction with host Mxra8 receptor; sequence QSGN. Residue Asn532 is glycosylated (N-linked (GlcNAc...) asparagine; by host). The segment at 548–554 is interaction with host Mxra8 receptor; that stretch reads TINSCKI. N-linked (GlcNAc...) asparagine; by host glycosylation occurs at Asn594. A helical membrane pass occupies residues 695-715; that stretch reads PAATIAAVSAAGLAVVLSLLA. Residues 716 to 754 lie on the Cytoplasmic side of the membrane; that stretch reads SCYMFATARRKCLTPYALTPGAVVPVTLGVLCCAPRAHA. Residue Cys717 is the site of S-stearoyl cysteine; by host attachment. Positions 722-726 are interaction with the capsid protein; the sequence is TARRK. Cys727 carries the S-stearoyl cysteine; by host lipid modification. Residues 727 to 747 are transient transmembrane before p62-6K protein processing; sequence CLTPYALTPGAVVPVTLGVLC. Cysteines 727 and 748 form a disulfide. S-palmitoyl cysteine; by host attachment occurs at residues Cys747 and Cys748. At 755–769 the chain is on the extracellular side; sequence ASFAESMAYLWDENQ. A glycan (N-linked (GlcNAc...) asparagine; by host) is linked at Asn768. A helical membrane pass occupies residues 770–790; sequence TLFWLELATPLAAIIILVCCL. The Cytoplasmic segment spans residues 791-792; it reads KN. Residues 793 to 813 form a helical membrane-spanning segment; the sequence is LLCCCKPLSFLVLVSLGTPVV. Extracellular loops occupy residues 814–815 and 826–1227; these read KS and VGFP…WVQR. Disulfide bonds link Cys864-Cys929, Cys877-Cys909, Cys878-Cys911, and Cys883-Cys893. The segment at 899–916 is E1 fusion peptide loop; that stretch reads VYPFMWGGAYCFCDTENT. Asn956 and Asn1085 each carry an N-linked (GlcNAc...) asparagine; by host glycan. 4 disulfide bridges follow: Cys1074–Cys1086, Cys1116–Cys1191, Cys1121–Cys1195, and Cys1143–Cys1185. The helical transmembrane segment at 1228–1248 threads the bilayer; the sequence is VAGGLGGLTLAAVAVLILVTC. The S-palmitoyl cysteine; by host moiety is linked to residue Cys1248. The Cytoplasmic segment spans residues 1249-1253; the sequence is VTMRR.

In terms of assembly, homodimer. Homomultimer. Interacts with host karyopherin KPNA4; this interaction allows the nuclear import of the viral capsid protein. Interacts with spike glycoprotein E2. Interacts with host IRAK1; the interaction leads to inhibition of IRAK1-dependent signaling. As to quaternary structure, the precursor of protein E3/E2 and E1 form a heterodimer shortly after synthesis. Interacts with spike glycoprotein E2. The precursor of protein E3/E2 and E1 form a heterodimer shortly after synthesis. Processing of the precursor of protein E3/E2 into E2 and E3 results in a heterodimer of the spike glycoproteins E2 and E1. Spike at virion surface are constituted of a trimer of E2-E1 heterodimers. After target cell attachment and endocytosis, E1 change conformation to form homotrimers. Interacts with 6K protein. E1/E2 heterodimer interacts with host LDLR. In terms of assembly, interacts with spike glycoprotein E1. Processing of the precursor of protein E3/E2 into E2 and E3 results in a heterodimer of the spike glycoproteins E2 and E1. Spike at virion surface are constituted of a trimer of E2-E1 heterodimers. Interacts with 6K protein. Interacts with host MXRA8; this interaction mediates virus entry. As to quaternary structure, oligomer. Interacts with spike glycoprotein E1. Interacts with spike glycoprotein E2. In terms of processing, structural polyprotein: Specific enzymatic cleavages in vivo yield mature proteins. Capsid protein is auto-cleaved during polyprotein translation, unmasking a signal peptide at the N-terminus of the precursor of E3/E2. The remaining polyprotein is then targeted to the host endoplasmic reticulum, where host signal peptidase cleaves it into pE2, 6K and E1 proteins. pE2 is further processed to mature E3 and E2 by host furin in trans-Golgi vesicle. Post-translationally, palmitoylated via thioester bonds. These palmitoylations may induce disruption of the C-terminus transmembrane. This would result in the reorientation of E2 C-terminus from lumenal to cytoplasmic side. N-glycosylated. In terms of processing, palmitoylated via thioester bonds.

Its subcellular location is the virion. It is found in the host cytoplasm. The protein localises to the host cell membrane. The protein resides in the host nucleus. It localises to the virion membrane. Its subcellular location is the host Golgi apparatus. It is found in the host trans-Golgi network. The protein localises to the host endoplasmic reticulum. The enzyme catalyses Autocatalytic release of the core protein from the N-terminus of the togavirus structural polyprotein by hydrolysis of a -Trp-|-Ser- bond.. Functionally, forms an icosahedral capsid with a T=4 symmetry composed of 240 copies of the capsid protein surrounded by a lipid membrane through which penetrate 80 spikes composed of trimers of E1-E2 heterodimers. The capsid protein binds to the viral RNA genome at a site adjacent to a ribosome binding site for viral genome translation following genome release. Possesses a protease activity that results in its autocatalytic cleavage from the nascent structural protein. Following its self-cleavage, the capsid protein transiently associates with ribosomes, and within several minutes the protein binds to viral RNA and rapidly assembles into icosahedric core particles. The resulting nucleocapsid eventually associates with the cytoplasmic domain of the spike glycoprotein E2 at the cell membrane, leading to budding and formation of mature virions. In case of infection, new virions attach to target cells and after clathrin-mediated endocytosis their membrane fuses with the host endosomal membrane. This leads to the release of the nucleocapsid into the cytoplasm, followed by an uncoating event necessary for the genomic RNA to become accessible. The uncoating might be triggered by the interaction of capsid proteins with ribosomes. Binding of ribosomes would release the genomic RNA since the same region is genomic RNA-binding and ribosome-binding. Specifically inhibits interleukin-1 receptor-associated kinase 1/IRAK1-dependent signaling during viral entry, representing a means by which the alphaviruses may evade innate immune detection and activation prior to viral gene expression. Its function is as follows. Provides the signal sequence for the translocation of the precursor of protein E3/E2 to the host endoplasmic reticulum. Furin-cleaved E3 remains associated with spike glycoprotein E1 and mediates pH protection of the latter during the transport via the secretory pathway. After virion release from the host cell, the assembly protein E3 is gradually released in the extracellular space. Plays a role in viral attachment to target host cell, by binding to the cell receptor MXRA8. The host LDLR may also act as a cell receptor for viral entry. Synthesized as a p62 precursor which is processed by furin at the cell membrane just before virion budding, giving rise to E2-E1 heterodimer. The p62-E1 heterodimer is stable, whereas E2-E1 is unstable and dissociate at low pH. p62 is processed at the last step, presumably to avoid E1 fusion activation before its final export to cell surface. E2 C-terminus contains a transitory transmembrane that would be disrupted by palmitoylation, resulting in reorientation of the C-terminal tail from lumenal to cytoplasmic side. This step is critical since E2 C-terminus is involved in budding by interacting with capsid proteins. This release of E2 C-terminus in cytoplasm occurs lately in protein export, and precludes premature assembly of particles at the endoplasmic reticulum membrane. In terms of biological role, acts as a viroporin that participates in virus glycoprotein processing and transport to the plasma membrane, cell permeabilization and budding of viral particles. Disrupts the calcium homeostasis of the cell, probably at the endoplasmic reticulum level. This leads to cytoplasmic calcium elevation. Because of its lipophilic properties, the 6K protein is postulated to influence the selection of lipids that interact with the transmembrane domains of the glycoproteins, which, in turn, affects the deformability of the bilayer required for the extreme curvature that occurs as budding proceeds. Present in low amount in virions, about 3% compared to viral glycoproteins. Functionally, class II viral fusion protein. Fusion activity is inactive as long as E1 is bound to E2 in mature virion. After virus attachment to target cell via host MXRA8 and endocytosis, acidification of the endosome induce dissociation of E1/E2 heterodimer and concomitant trimerization of the E1 subunits. This E1 trimer is fusion active, and promotes release of viral nucleocapsid in cytoplasm after endosome and viral membrane fusion. Efficient fusion requires the presence of cholesterol and sphingolipid in the target membrane. The polypeptide is Structural polyprotein (Aedes vexans (Inland floodwater mosquito)).